Consider the following 116-residue polypeptide: Staphylococcal complement inhibitor (116 aa).

The first 31 residues, Met-1 to Ala-31, serve as a signal peptide directing secretion. Positions Leu-62–Gly-79 are essential for activity.

Belongs to the SCIN family.

It localises to the secreted. In terms of biological role, involved in countering the first line of host defense mechanisms. Efficiently inhibits opsonization, phagocytosis and killing of S.aureus by human neutrophils. Acts by binding and stabilizing human C3 convertases (C4b2a and C3bBb), leading to their inactivation. The convertases are no longer able to cleave complement C3, therefore preventing further C3b deposition on the bacterial surface and phagocytosis of the bacterium. Also prevents C5a-induced neutrophil responses. In Staphylococcus aureus (strain N315), this protein is Staphylococcal complement inhibitor (scn).